Consider the following 82-residue polypeptide: Small ribosomal subunit protein bS16 (82 aa).

The protein belongs to the bacterial ribosomal protein bS16 family.

This is Small ribosomal subunit protein bS16 from Microcystis aeruginosa (strain NIES-843 / IAM M-2473).